The chain runs to 340 residues: Ketol-acid reductoisomerase (NADP(+)) (340 aa).

In terms of domain architecture, KARI N-terminal Rossmann spans 1–182 (MRVYYDRDCD…GGGRSGIIET (182 aa)). Residues 24-27 (YGSQ), Arg-48, Ser-51, Ser-53, and 83-86 (DELQ) contribute to the NADP(+) site. His-108 is an active-site residue. Gly-134 is a binding site for NADP(+). Residues 183 to 329 (NFREECETDL…AKLREMMPWI (147 aa)) enclose the KARI C-terminal knotted domain. Mg(2+) is bound by residues Asp-191, Glu-195, Glu-227, and Glu-231. Position 252 (Ser-252) interacts with substrate.

This sequence belongs to the ketol-acid reductoisomerase family. It depends on Mg(2+) as a cofactor.

The catalysed reaction is (2R)-2,3-dihydroxy-3-methylbutanoate + NADP(+) = (2S)-2-acetolactate + NADPH + H(+). It catalyses the reaction (2R,3R)-2,3-dihydroxy-3-methylpentanoate + NADP(+) = (S)-2-ethyl-2-hydroxy-3-oxobutanoate + NADPH + H(+). It functions in the pathway amino-acid biosynthesis; L-isoleucine biosynthesis; L-isoleucine from 2-oxobutanoate: step 2/4. Its pathway is amino-acid biosynthesis; L-valine biosynthesis; L-valine from pyruvate: step 2/4. Functionally, involved in the biosynthesis of branched-chain amino acids (BCAA). Catalyzes an alkyl-migration followed by a ketol-acid reduction of (S)-2-acetolactate (S2AL) to yield (R)-2,3-dihydroxy-isovalerate. In the isomerase reaction, S2AL is rearranged via a Mg-dependent methyl migration to produce 3-hydroxy-3-methyl-2-ketobutyrate (HMKB). In the reductase reaction, this 2-ketoacid undergoes a metal-dependent reduction by NADPH to yield (R)-2,3-dihydroxy-isovalerate. The chain is Ketol-acid reductoisomerase (NADP(+)) from Ruegeria sp. (strain TM1040) (Silicibacter sp.).